The following is a 189-amino-acid chain: HGPRTase-like protein (189 aa).

This sequence belongs to the purine/pyrimidine phosphoribosyltransferase family. Archaeal HPRT subfamily.

Its function is as follows. May catalyze a purine salvage reaction, the substrate is unknown. The chain is HGPRTase-like protein from Halorubrum lacusprofundi (strain ATCC 49239 / DSM 5036 / JCM 8891 / ACAM 34).